Reading from the N-terminus, the 262-residue chain is Phosphonates import ATP-binding protein PhnC (262 aa).

The ABC transporter domain occupies 5 to 253 (IRVEKLAKTF…RFDHLYRSIN (249 aa)). 37–44 (GPSGSGKS) is a binding site for ATP.

Belongs to the ABC transporter superfamily. Phosphonates importer (TC 3.A.1.9.1) family. As to quaternary structure, the complex is composed of two ATP-binding proteins (PhnC), two transmembrane proteins (PhnE) and a solute-binding protein (PhnD).

The protein localises to the cell inner membrane. It carries out the reaction phosphonate(out) + ATP + H2O = phosphonate(in) + ADP + phosphate + H(+). Functionally, part of the ABC transporter complex PhnCDE involved in phosphonates import. Responsible for energy coupling to the transport system. The polypeptide is Phosphonates import ATP-binding protein PhnC (Escherichia coli O6:H1 (strain CFT073 / ATCC 700928 / UPEC)).